Here is a 352-residue protein sequence, read N- to C-terminus: Deoxyhypusine synthase-like protein (352 aa).

It belongs to the deoxyhypusine synthase family.

This chain is Deoxyhypusine synthase-like protein, found in Coxiella burnetii (strain Dugway 5J108-111).